We begin with the raw amino-acid sequence, 478 residues long: MTEKTPDDVFKLAKDEKVEYVDVRFCDLPGIMQHFTIPASAFDKSVFDDGLAFDGSSIRGFQSIHESDMLLLPDPETARIDPFRAAKTLNINFFVHDPFTLEPYSRDPRNIARKAENYLISTGIADTAYFGAEAEFYIFDSVSFDSRANGSFYEVDAISGWWNTGAATEADGSPNRGYKVRHKGGYFPVAPNDQYVDLRDKMLTNLINSGFILEKGHHEVGSGGQAEINYQFNSLLHAADDMQLYKYIIKNTAWQNGKTVTFMPKPLFGDNGSGMHCHQSLWKDGAPLMYDETGYAGLSDTARHYIGGLLHHAPSLLAFTNPTVNSYKRLVPGYEAPINLVYSQRNRSACVRIPITGSNPKAKRLEFRSPDSSGNPYLAFSAMLMAGLDGIKNKIEPQAPVDKDLYELPPEEAASIPQTPTQLSDVIDRLEADHEYLTEGGVFTNDLIETWISFKRENEIEPVNIRPHPYEFALYYDV.

The GS beta-grasp domain maps to 16 to 100 (EKVEYVDVRF…INFFVHDPFT (85 aa)). In terms of domain architecture, GS catalytic spans 108–478 (PRNIARKAEN…PYEFALYYDV (371 aa)). The Mg(2+) site is built by Glu-133 and Glu-135. Glu-214 contributes to the ATP binding site. Positions 219 and 227 each coordinate Mg(2+). 230–232 (YQF) contacts ATP. L-glutamate is bound by residues 271–272 (NG) and Gly-272. His-276 lines the Mg(2+) pocket. ATP is bound by residues 278–280 (HQS) and Ser-280. Positions 329, 335, and 347 each coordinate L-glutamate. Residues Arg-347, Arg-352, and Lys-361 each coordinate ATP. Glu-366 provides a ligand contact to Mg(2+). Arg-368 is an L-glutamate binding site. Position 406 is an O-AMP-tyrosine (Tyr-406).

Belongs to the glutamine synthetase family. In terms of assembly, oligomer of 12 subunits arranged in the form of two hexagons. Mg(2+) serves as cofactor.

It localises to the cytoplasm. The catalysed reaction is L-glutamate + NH4(+) + ATP = L-glutamine + ADP + phosphate + H(+). Its activity is regulated as follows. When cellular nitrogen levels are high, the C-terminal adenylyl transferase (AT) of GlnE inhibits GlnA by covalent transfer of an adenylyl group from ATP to Tyr-406. Conversely, when nitrogen levels are low, the N-terminal adenylyl removase (AR) of GlnE activates GlnA by removing the adenylyl group by phosphorolysis. The fully adenylated enzyme complex is inactive. In terms of biological role, involved in nitrogen metabolism via ammonium assimilation. Catalyzes the ATP-dependent biosynthesis of glutamine from glutamate and ammonia. Also plays a key role in controlling the ammonia levels within infected host cells and so contributes to the pathogens capacity to inhibit phagosome acidification and phagosome-lysosome fusion. Involved in cell wall biosynthesis via the production of the major component poly-L-glutamine (PLG). PLG synthesis in the cell wall occurs only in nitrogen limiting conditions and on the contrary high nitrogen conditions inhibit PLG synthesis. In Mycobacterium bovis (strain ATCC BAA-935 / AF2122/97), this protein is Glutamine synthetase.